The following is a 173-amino-acid chain: Small ribosomal subunit protein uS5 (173 aa).

An S5 DRBM domain is found at 17–80 (WQERVIQIRR…SDAKKHVVDV (64 aa)).

This sequence belongs to the universal ribosomal protein uS5 family. Part of the 30S ribosomal subunit. Contacts proteins S4 and S8.

Functionally, with S4 and S12 plays an important role in translational accuracy. Located at the back of the 30S subunit body where it stabilizes the conformation of the head with respect to the body. In Picosynechococcus sp. (strain ATCC 27264 / PCC 7002 / PR-6) (Agmenellum quadruplicatum), this protein is Small ribosomal subunit protein uS5.